The primary structure comprises 285 residues: NADPH-dependent 7-cyano-7-deazaguanine reductase (285 aa).

91–93 (IES) provides a ligand contact to substrate. 93-94 (SK) serves as a coordination point for NADPH. The Thioimide intermediate role is filled by Cys191. Residue Asp198 is the Proton donor of the active site. Residue 230–231 (HE) participates in substrate binding. 259–260 (RG) contacts NADPH.

It belongs to the GTP cyclohydrolase I family. QueF type 2 subfamily. Homodimer.

It is found in the cytoplasm. The catalysed reaction is 7-aminomethyl-7-carbaguanine + 2 NADP(+) = 7-cyano-7-deazaguanine + 2 NADPH + 3 H(+). Its pathway is tRNA modification; tRNA-queuosine biosynthesis. Functionally, catalyzes the NADPH-dependent reduction of 7-cyano-7-deazaguanine (preQ0) to 7-aminomethyl-7-deazaguanine (preQ1). The protein is NADPH-dependent 7-cyano-7-deazaguanine reductase of Legionella pneumophila (strain Lens).